The following is a 448-amino-acid chain: 3-phosphoshikimate 1-carboxyvinyltransferase (448 aa).

Lys-28, Ser-29, and Arg-33 together coordinate 3-phosphoshikimate. Lys-28 provides a ligand contact to phosphoenolpyruvate. Phosphoenolpyruvate contacts are provided by Gly-100 and Arg-128. Ser-173, Gln-175, Asp-326, and Lys-353 together coordinate 3-phosphoshikimate. Gln-175 lines the phosphoenolpyruvate pocket. The active-site Proton acceptor is Asp-326. The phosphoenolpyruvate site is built by Arg-357 and Arg-405.

Belongs to the EPSP synthase family. As to quaternary structure, monomer.

The protein resides in the cytoplasm. The enzyme catalyses 3-phosphoshikimate + phosphoenolpyruvate = 5-O-(1-carboxyvinyl)-3-phosphoshikimate + phosphate. It functions in the pathway metabolic intermediate biosynthesis; chorismate biosynthesis; chorismate from D-erythrose 4-phosphate and phosphoenolpyruvate: step 6/7. Catalyzes the transfer of the enolpyruvyl moiety of phosphoenolpyruvate (PEP) to the 5-hydroxyl of shikimate-3-phosphate (S3P) to produce enolpyruvyl shikimate-3-phosphate and inorganic phosphate. In Sinorhizobium fredii (strain NBRC 101917 / NGR234), this protein is 3-phosphoshikimate 1-carboxyvinyltransferase.